The following is a 593-amino-acid chain: NADH-quinone oxidoreductase subunit C/D (593 aa).

The NADH dehydrogenase I subunit C stretch occupies residues 1–184; it reads MTADSALYIP…DPYSLSAAKQ (184 aa). The interval 208–593 is NADH dehydrogenase I subunit D; the sequence is DYMFLNLGPN…IDFVMADVDR (386 aa).

In the N-terminal section; belongs to the complex I 30 kDa subunit family. The protein in the C-terminal section; belongs to the complex I 49 kDa subunit family. In terms of assembly, NDH-1 is composed of 13 different subunits. Subunits NuoB, CD, E, F, and G constitute the peripheral sector of the complex.

The protein localises to the cell inner membrane. The catalysed reaction is a quinone + NADH + 5 H(+)(in) = a quinol + NAD(+) + 4 H(+)(out). In terms of biological role, NDH-1 shuttles electrons from NADH, via FMN and iron-sulfur (Fe-S) centers, to quinones in the respiratory chain. The immediate electron acceptor for the enzyme in this species is believed to be ubiquinone. Couples the redox reaction to proton translocation (for every two electrons transferred, four hydrogen ions are translocated across the cytoplasmic membrane), and thus conserves the redox energy in a proton gradient. The protein is NADH-quinone oxidoreductase subunit C/D of Pseudomonas paraeruginosa (strain DSM 24068 / PA7) (Pseudomonas aeruginosa (strain PA7)).